The primary structure comprises 70 residues: MPREIKEVKDFLNKARRSDARAVKIKKNPTNTKFKIRCSRFLYTLVVQDKEKADKIKQSLPPGLQVKEVK.

It belongs to the eukaryotic ribosomal protein eL38 family.

The chain is Large ribosomal subunit protein eL38 (RpL38) from Drosophila melanogaster (Fruit fly).